Here is a 342-residue protein sequence, read N- to C-terminus: Probable RNA methyltransferase PST_2231 (342 aa).

The Proton acceptor role is filled by Glu91. One can recognise a Radical SAM core domain in the interval 94-320 (LLPRDGLCVS…TKVRNSAGQD (227 aa)). Cys101 and Cys325 are oxidised to a cystine. Residues Cys108, Cys112, and Cys115 each coordinate [4Fe-4S] cluster. Residues 153-154 (GE), Ser183, 206-208 (SLH), and Asn282 contribute to the S-adenosyl-L-methionine site. The S-methylcysteine intermediate role is filled by Cys325.

This sequence belongs to the radical SAM superfamily. RlmN family. The cofactor is [4Fe-4S] cluster.

The protein localises to the cytoplasm. In Stutzerimonas stutzeri (strain A1501) (Pseudomonas stutzeri), this protein is Probable RNA methyltransferase PST_2231.